A 150-amino-acid polypeptide reads, in one-letter code: uncharacterized protein (150 aa).

The segment covering 81-90 (TTKPSCSFAQ) has biased composition (polar residues). Residues 81–125 (TTKPSCSFAQPVTPRTREGAGVRGHRRRRRGSLSLIPWKTSNDKQ) are disordered.

This is an uncharacterized protein from Homo sapiens (Human).